The following is a 231-amino-acid chain: N-acetylmuramate alpha-1-phosphate uridylyltransferase (231 aa).

Residues 11-13 (GER) and lysine 23 contribute to the UTP site. Asparagine 106 contacts substrate. Aspartate 108 lines the Mg(2+) pocket. Substrate is bound by residues aspartate 146 and aspartate 213. Mg(2+) is bound at residue aspartate 213.

This sequence belongs to the nucleotidyltransferase MurU family. Monomer. Mg(2+) serves as cofactor.

The catalysed reaction is N-acetyl-alpha-D-muramate 1-phosphate + UDP + H(+) = UDP-N-acetyl-alpha-D-muramate + phosphate. It participates in cell wall biogenesis; peptidoglycan recycling. Its function is as follows. Catalyzes the formation of UDP-N-acetylmuramate (UDP-MurNAc), a crucial precursor of the bacterial peptidoglycan cell wall, from UTP and MurNAc-alpha-1P. Is likely involved in peptidoglycan recycling as part of a cell wall recycling pathway that bypasses de novo biosynthesis of the peptidoglycan precursor UDP-MurNAc. Is able to complement the fosfomycin sensitivity phenotype of a P.putida mutant lacking murU. This chain is N-acetylmuramate alpha-1-phosphate uridylyltransferase, found in Neisseria meningitidis serogroup B (strain ATCC BAA-335 / MC58).